We begin with the raw amino-acid sequence, 155 residues long: Small ribosomal subunit protein uS7c (155 aa).

Belongs to the universal ribosomal protein uS7 family. In terms of assembly, part of the 30S ribosomal subunit.

The protein resides in the plastid. It localises to the chloroplast. In terms of biological role, one of the primary rRNA binding proteins, it binds directly to 16S rRNA where it nucleates assembly of the head domain of the 30S subunit. In Cedrus deodara (Deodar cedar), this protein is Small ribosomal subunit protein uS7c (rps7).